The chain runs to 262 residues: Hydroxyethylthiazole kinase (262 aa).

Residue Met43 coordinates substrate. The ATP site is built by Arg118 and Thr164. Residue Ala191 coordinates substrate.

This sequence belongs to the Thz kinase family. Requires Mg(2+) as cofactor.

It catalyses the reaction 5-(2-hydroxyethyl)-4-methylthiazole + ATP = 4-methyl-5-(2-phosphooxyethyl)-thiazole + ADP + H(+). It functions in the pathway cofactor biosynthesis; thiamine diphosphate biosynthesis; 4-methyl-5-(2-phosphoethyl)-thiazole from 5-(2-hydroxyethyl)-4-methylthiazole: step 1/1. Catalyzes the phosphorylation of the hydroxyl group of 4-methyl-5-beta-hydroxyethylthiazole (THZ). In Cereibacter sphaeroides (strain ATCC 17029 / ATH 2.4.9) (Rhodobacter sphaeroides), this protein is Hydroxyethylthiazole kinase.